A 437-amino-acid polypeptide reads, in one-letter code: tRNA modification GTPase MnmE (437 aa).

Residues R21, E80, and R120 each coordinate (6S)-5-formyl-5,6,7,8-tetrahydrofolate. The TrmE-type G domain occupies G218 to G361. N228 lines the K(+) pocket. Residues N228–T233, S247–T253, and D272–G275 each bind GTP. S232 provides a ligand contact to Mg(2+). Positions 247, 249, and 252 each coordinate K(+). Residue T253 participates in Mg(2+) binding. (6S)-5-formyl-5,6,7,8-tetrahydrofolate is bound at residue K437.

Belongs to the TRAFAC class TrmE-Era-EngA-EngB-Septin-like GTPase superfamily. TrmE GTPase family. In terms of assembly, homodimer. Heterotetramer of two MnmE and two MnmG subunits. K(+) serves as cofactor.

It is found in the cytoplasm. Exhibits a very high intrinsic GTPase hydrolysis rate. Involved in the addition of a carboxymethylaminomethyl (cmnm) group at the wobble position (U34) of certain tRNAs, forming tRNA-cmnm(5)s(2)U34. The sequence is that of tRNA modification GTPase MnmE from Methylobacterium sp. (strain 4-46).